Consider the following 261-residue polypeptide: Na(+)-translocating NADH-quinone reductase subunit C (261 aa).

The chain crosses the membrane as a helical span at residues 11-31 (LLVALVVCLVSSVFVAGAAVA). At threonine 230 the chain carries FMN phosphoryl threonine.

This sequence belongs to the NqrC family. In terms of assembly, composed of six subunits; NqrA, NqrB, NqrC, NqrD, NqrE and NqrF. FMN serves as cofactor.

Its subcellular location is the cell inner membrane. It catalyses the reaction a ubiquinone + n Na(+)(in) + NADH + H(+) = a ubiquinol + n Na(+)(out) + NAD(+). Its function is as follows. NQR complex catalyzes the reduction of ubiquinone-1 to ubiquinol by two successive reactions, coupled with the transport of Na(+) ions from the cytoplasm to the periplasm. NqrA to NqrE are probably involved in the second step, the conversion of ubisemiquinone to ubiquinol. The protein is Na(+)-translocating NADH-quinone reductase subunit C of Pseudomonas aeruginosa (strain ATCC 15692 / DSM 22644 / CIP 104116 / JCM 14847 / LMG 12228 / 1C / PRS 101 / PAO1).